Here is a 473-residue protein sequence, read N- to C-terminus: Photosystem II CP43 reaction center protein (473 aa).

Residues 1–14 (MKTLYSLRRFYPVE) constitute a propeptide that is removed on maturation. Thr15 is modified (N-acetylthreonine). Thr15 carries the phosphothreonine modification. Transmembrane regions (helical) follow at residues 69–93 (LFEVAHFVPEKPMYEQGLILLPHLA), 134–155 (LLGPETLEESFPFFGYVWKDRN), 178–200 (KALYFGGVYDTWAPGGGDVRKIT), 255–275 (KPFAWARRALVWSGEAYLSYS), and 291–312 (WFNNTAYPSEFYGPTGPEASQA). Glu367 is a binding site for [CaMn4O5] cluster. A helical membrane pass occupies residues 447-471 (RARAAAAGFEKGIDRDFEPVLSMTP).

Belongs to the PsbB/PsbC family. PsbC subfamily. As to quaternary structure, PSII is composed of 1 copy each of membrane proteins PsbA, PsbB, PsbC, PsbD, PsbE, PsbF, PsbH, PsbI, PsbJ, PsbK, PsbL, PsbM, PsbT, PsbX, PsbY, PsbZ, Psb30/Ycf12, at least 3 peripheral proteins of the oxygen-evolving complex and a large number of cofactors. It forms dimeric complexes. It depends on Binds multiple chlorophylls and provides some of the ligands for the Ca-4Mn-5O cluster of the oxygen-evolving complex. It may also provide a ligand for a Cl- that is required for oxygen evolution. PSII binds additional chlorophylls, carotenoids and specific lipids. as a cofactor.

The protein resides in the plastid. Its subcellular location is the chloroplast thylakoid membrane. Its function is as follows. One of the components of the core complex of photosystem II (PSII). It binds chlorophyll and helps catalyze the primary light-induced photochemical processes of PSII. PSII is a light-driven water:plastoquinone oxidoreductase, using light energy to abstract electrons from H(2)O, generating O(2) and a proton gradient subsequently used for ATP formation. This chain is Photosystem II CP43 reaction center protein, found in Populus trichocarpa (Western balsam poplar).